The chain runs to 241 residues: MNKDTIFSAPIEKLGDFTFDESVAEVFPDMIQRSVPGYSNIITAIGMLAQRFVTEGSQVYDLGCSRGAGILSIRRNLQTNQVKIIGVDNSQPMVERCRSHINAYHSDVPVEILCDDIRHIEIKNASMVVLNFTLQFLPRADRLELLTKIYHGLNPNGILVLSEKFTFTNQAMSELLIDLHHTFKRANGYSELEVSQKRTALENVMLTDSIETHKDRLKQAGFSQIELWFQCFNFGSMIAVK.

Residues Tyr-38, 63–65 (GCS), 88–89 (DN), 116–117 (DI), Asn-131, and Arg-198 contribute to the S-adenosyl-L-methionine site.

Belongs to the class I-like SAM-binding methyltransferase superfamily. Cx-SAM synthase family. Homodimer.

The catalysed reaction is prephenate + S-adenosyl-L-methionine = carboxy-S-adenosyl-L-methionine + 3-phenylpyruvate + H2O. Functionally, catalyzes the conversion of S-adenosyl-L-methionine (SAM) to carboxy-S-adenosyl-L-methionine (Cx-SAM). This is Carboxy-S-adenosyl-L-methionine synthase from Actinobacillus pleuropneumoniae serotype 3 (strain JL03).